The primary structure comprises 338 residues: Large ribosomal subunit protein uL3 (338 aa).

Residues His230 to Gly258 are disordered.

This sequence belongs to the universal ribosomal protein uL3 family. As to quaternary structure, part of the 50S ribosomal subunit. Forms a cluster with proteins L14 and L24e.

Functionally, one of the primary rRNA binding proteins, it binds directly near the 3'-end of the 23S rRNA, where it nucleates assembly of the 50S subunit. This Pyrobaculum aerophilum (strain ATCC 51768 / DSM 7523 / JCM 9630 / CIP 104966 / NBRC 100827 / IM2) protein is Large ribosomal subunit protein uL3.